A 182-amino-acid polypeptide reads, in one-letter code: Peptidyl-prolyl cis-trans isomerase ssp-1 (182 aa).

The WW domain occupies 7–41 (TGLPEDWEVRHSQSKNLPYYFNSATKTSRWEPPSG). One can recognise a PpiC domain in the interval 71-182 (QGKIRCAHLL…SGLHLIERLE (112 aa)).

It catalyses the reaction [protein]-peptidylproline (omega=180) = [protein]-peptidylproline (omega=0). Site-specific PPIase with respect to the amino acid N-terminal to the proline residue. Peptides with glutamate, phosphoserine, or phosphothreonine in the -1 position are the best substrates. It is not only able to isomerize small peptides but is also active in protein folding. This chain is Peptidyl-prolyl cis-trans isomerase ssp-1 (ssp-1), found in Neurospora crassa (strain ATCC 24698 / 74-OR23-1A / CBS 708.71 / DSM 1257 / FGSC 987).